Consider the following 313-residue polypeptide: Biotin synthase (313 aa).

The Radical SAM core domain maps to 37 to 263 (YYGKKVKLNM…INPTKEIRIA (227 aa)). [4Fe-4S] cluster is bound by residues cysteine 55, cysteine 59, and cysteine 62. Residues cysteine 98, cysteine 131, cysteine 191, and arginine 261 each coordinate [2Fe-2S] cluster.

Belongs to the radical SAM superfamily. Biotin synthase family. In terms of assembly, homodimer. [4Fe-4S] cluster is required as a cofactor. It depends on [2Fe-2S] cluster as a cofactor.

The enzyme catalyses (4R,5S)-dethiobiotin + (sulfur carrier)-SH + 2 reduced [2Fe-2S]-[ferredoxin] + 2 S-adenosyl-L-methionine = (sulfur carrier)-H + biotin + 2 5'-deoxyadenosine + 2 L-methionine + 2 oxidized [2Fe-2S]-[ferredoxin]. The protein operates within cofactor biosynthesis; biotin biosynthesis; biotin from 7,8-diaminononanoate: step 2/2. Its function is as follows. Catalyzes the conversion of dethiobiotin (DTB) to biotin by the insertion of a sulfur atom into dethiobiotin via a radical-based mechanism. The polypeptide is Biotin synthase (Staphylococcus epidermidis (strain ATCC 12228 / FDA PCI 1200)).